The primary structure comprises 324 residues: Arginase (324 aa).

Positions 115, 143, 145, and 147 each coordinate Mn(2+). Substrate-binding positions include 145–149 (HADIN), 156–158 (SGN), and D202. Mn(2+)-binding residues include D249 and D251. 2 residues coordinate substrate: T263 and E294.

The protein belongs to the arginase family. As to quaternary structure, homotrimer. The cofactor is Mn(2+).

The enzyme catalyses L-arginine + H2O = urea + L-ornithine. It participates in nitrogen metabolism; urea cycle; L-ornithine and urea from L-arginine: step 1/1. The sequence is that of Arginase (agaA) from Emericella nidulans (strain FGSC A4 / ATCC 38163 / CBS 112.46 / NRRL 194 / M139) (Aspergillus nidulans).